The primary structure comprises 233 residues: Orotate phosphoribosyltransferase (233 aa).

Lys29 is a 5-phospho-alpha-D-ribose 1-diphosphate binding site. 37–38 (FF) serves as a coordination point for orotate. 5-phospho-alpha-D-ribose 1-diphosphate contacts are provided by residues 79–80 (YK), Arg109, Lys110, Lys113, His115, and 135–143 (DDVITAGTA). Orotate is bound by residues Thr139 and Arg167.

The protein belongs to the purine/pyrimidine phosphoribosyltransferase family. PyrE subfamily. In terms of assembly, homodimer.

It carries out the reaction orotidine 5'-phosphate + diphosphate = orotate + 5-phospho-alpha-D-ribose 1-diphosphate. It functions in the pathway pyrimidine metabolism; UMP biosynthesis via de novo pathway; UMP from orotate: step 1/2. Catalyzes the transfer of a ribosyl phosphate group from 5-phosphoribose 1-diphosphate to orotate, leading to the formation of orotidine monophosphate (OMP). The chain is Orotate phosphoribosyltransferase (ura-5) from Neurospora crassa (strain ATCC 24698 / 74-OR23-1A / CBS 708.71 / DSM 1257 / FGSC 987).